We begin with the raw amino-acid sequence, 320 residues long: Thiamine thiazole synthase (320 aa).

Substrate is bound by residues Cys-82, 103-104 (EA), Gly-111, and Val-176. 2,3-didehydroalanine (Cys) is present on Cys-209. Residues Asp-211, His-226, Met-278, and 288 to 290 (RMG) each bind substrate.

This sequence belongs to the THI4 family. Homooctamer. Fe cation is required as a cofactor. In terms of processing, during the catalytic reaction, a sulfide is transferred from Cys-209 to a reaction intermediate, generating a dehydroalanine residue.

Its subcellular location is the cytoplasm. It localises to the nucleus. It catalyses the reaction [ADP-thiazole synthase]-L-cysteine + glycine + NAD(+) = [ADP-thiazole synthase]-dehydroalanine + ADP-5-ethyl-4-methylthiazole-2-carboxylate + nicotinamide + 3 H2O + 2 H(+). Its function is as follows. Involved in biosynthesis of the thiamine precursor thiazole. Catalyzes the conversion of NAD and glycine to adenosine diphosphate 5-(2-hydroxyethyl)-4-methylthiazole-2-carboxylic acid (ADT), an adenylated thiazole intermediate. The reaction includes an iron-dependent sulfide transfer from a conserved cysteine residue of the protein to a thiazole intermediate. The enzyme can only undergo a single turnover, which suggests it is a suicide enzyme. May have additional roles in adaptation to various stress conditions and in DNA damage tolerance. This Fusarium oxysporum f. sp. lycopersici (strain 4287 / CBS 123668 / FGSC 9935 / NRRL 34936) (Fusarium vascular wilt of tomato) protein is Thiamine thiazole synthase (sti35).